Here is a 42-residue protein sequence, read N- to C-terminus: Conodipine-M beta chain (42 aa).

Heterodimer of an alpha and a beta chains; probably disulfide-linked. As to expression, expressed by the venom duct.

The protein localises to the secreted. Heterodimer: conodipine-M catalyzes the calcium-dependent hydrolysis of the 2-acyl groups in 3-sn-phosphoglycerides. This activity may be supported by the alpha chain. Conodipine-M inhibits the binding of isradipine (a ligand specific for L-type calcium channel) to L-type calcium channels. The polypeptide is Conodipine-M beta chain (Conus magus (Magical cone)).